Consider the following 461-residue polypeptide: Steroidogenic factor 1 (461 aa).

The nuclear receptor DNA-binding region spans 10–85 (DELCPVCGDK…VGMRLEAVRA (76 aa)). The segment at 13 to 33 (CPVCGDKVSGYHYGLLTCESC) adopts an NR C4-type zinc-finger fold. 3 positions are modified to N6-acetyllysine: Lys-34, Lys-38, and Lys-72. An NR C4-type zinc finger spans residues 49-73 (CTESQSCKIDKTLRKRCPFCRFQKC). Lys-119 is covalently cross-linked (Glycyl lysine isopeptide (Lys-Gly) (interchain with G-Cter in SUMO)). A disordered region spans residues 119 to 153 (KLETGPPMGVPPPPPPPPDYMLPPGLHVPEPKGLA). A compositionally biased stretch (pro residues) spans 126-139 (MGVPPPPPPPPDYM). Lys-194 participates in a covalent cross-link: Glycyl lysine isopeptide (Lys-Gly) (interchain with G-Cter in SUMO). A Phosphoserine; by CDK7 modification is found at Ser-203. The 238-residue stretch at 222–459 (GVPELILQLL…NLLIEMLQAK (238 aa)) folds into the NR LBD domain. A 1,2-diacyl-sn-glycero-3-phosphocholine contacts are provided by Gly-341, Tyr-436, and Lys-440.

This sequence belongs to the nuclear hormone receptor family. NR5 subfamily. In terms of assembly, binds DNA as a monomer. Part of a complex consisting of SFPQ, NONO and NR5A1. Interacts with NR0B2. Interacts with DGKQ and CDK7. Binds to and activated by HIPK3. Acetylation stimulates the transcriptional activity. In terms of processing, sumoylation reduces CDK7-mediated phosphorylation on Ser-203. Post-translationally, phosphorylated on Ser-203 by CDK7. This phosphorylation promotes transcriptional activity.

Its subcellular location is the nucleus. In terms of biological role, transcriptional activator. Seems to be essential for sexual differentiation and formation of the primary steroidogenic tissues. Binds to the Ad4 site found in the promoter region of steroidogenic P450 genes such as CYP11A, CYP11B and CYP21B. Also regulates the AMH/Muellerian inhibiting substance gene as well as the AHCH and STAR genes. 5'-YCAAGGYC-3' and 5'-RRAGGTCA-3' are the consensus sequences for the recognition by NR5A1. The SFPQ-NONO-NR5A1 complex binds to the CYP17 promoter and regulates basal and cAMP-dependent transcriptional activity. Binds phospholipids with a phosphatidylinositol (PI) headgroup, in particular PI(3,4)P2 and PI(3,4,5)P3. Activated by the phosphorylation of NR5A1 by HIPK3 leading to increased steroidogenic gene expression upon cAMP signaling pathway stimulation. The sequence is that of Steroidogenic factor 1 (NR5A1) from Equus caballus (Horse).